The sequence spans 286 residues: MVVILEHEIPQGSQLYFGKSARLKRRIEERASQILYTAGFEEIITPSFSFLEHQRDTSSREVLRLSNEKNHQIALRNDTTLDVVRIITKRLGRSTEHRRWFYIQPVFSYPTNEIHQIGAESLGEADAKSMLKVAIEIFRSLELEPILQLSNMRIPLLCAEHSRLGLEVFAKMQVEKIMASEEYLGELLQIKNAQDLQRVTSKVPSFLKEELEKLRALAEGIEYPRFVFAPLYYAPMDYYNGIFFRMFEGNSTLLSGGIYEMDELQSCGFGLYTDQLIEKILRHNEG.

The protein belongs to the class-II aminoacyl-tRNA synthetase family. HisZ subfamily. Heteromultimer composed of HisG and HisZ subunits.

It localises to the cytoplasm. The protein operates within amino-acid biosynthesis; L-histidine biosynthesis; L-histidine from 5-phospho-alpha-D-ribose 1-diphosphate: step 1/9. Its function is as follows. Required for the first step of histidine biosynthesis. May allow the feedback regulation of ATP phosphoribosyltransferase activity by histidine. The protein is ATP phosphoribosyltransferase regulatory subunit (hisZ) of Wolinella succinogenes (strain ATCC 29543 / DSM 1740 / CCUG 13145 / JCM 31913 / LMG 7466 / NCTC 11488 / FDC 602W) (Vibrio succinogenes).